Here is a 182-residue protein sequence, read N- to C-terminus: Orotate phosphoribosyltransferase (182 aa).

5-phospho-alpha-D-ribose 1-diphosphate contacts are provided by residues arginine 96, lysine 97, lysine 100, histidine 102, and 122-130; that span reads EDTSTTGGS. Orotate is bound by residues threonine 126 and arginine 154.

This sequence belongs to the purine/pyrimidine phosphoribosyltransferase family. PyrE subfamily. In terms of assembly, homodimer. The cofactor is Mg(2+).

The enzyme catalyses orotidine 5'-phosphate + diphosphate = orotate + 5-phospho-alpha-D-ribose 1-diphosphate. Its pathway is pyrimidine metabolism; UMP biosynthesis via de novo pathway; UMP from orotate: step 1/2. Its function is as follows. Catalyzes the transfer of a ribosyl phosphate group from 5-phosphoribose 1-diphosphate to orotate, leading to the formation of orotidine monophosphate (OMP). The chain is Orotate phosphoribosyltransferase from Streptomyces avermitilis (strain ATCC 31267 / DSM 46492 / JCM 5070 / NBRC 14893 / NCIMB 12804 / NRRL 8165 / MA-4680).